We begin with the raw amino-acid sequence, 459 residues long: MLKIYNSMSREKQEFKPITPGKIGMYVCGITIYDLCHIGHGRTFVSFDMIVRYLRYLGYEVNFQRNITDVDDKIIKRAAENNESCDALTERLTAEMHKDFDALNMVRPDFEPKATLHMPEIIEMVQRLLDRGHAYVAPDGDVLFSVASYKEYGRLSGQNIDQLQAGARVEIDHNKQNPMDFVLWKMSKPGEPTWESPWGAGRPGWHIECSAMNGKHLGTHFDIHGGGSDLQFPHHENEIAQSCCAHDTPYVNYWMHTGMVMVDREKMSKSLGNFFTIRDVLKHYDAQTVRYFLLSGHYRSQLNYSEDNLKQARSALERLYTAFKDLDLTVTAAPADEYVTKFKSAMNDDFNTPEAYSVLFDMVREINRLKTTDMGAASALGVSMKQLADVLGIVSVDIETFFKGSGSDDEVAEIEALIVERNRARTEKDWAAADVARDRLNQLGVVLEDGENGTTWKKK.

C28 contributes to the Zn(2+) binding site. The 'HIGH' region motif lies at 30 to 40 (ITIYDLCHIGH). Residues C209, H234, and E238 each contribute to the Zn(2+) site. The short motif at 266-270 (KMSKS) is the 'KMSKS' region element. K269 contacts ATP.

The protein belongs to the class-I aminoacyl-tRNA synthetase family. Monomer. The cofactor is Zn(2+).

It is found in the cytoplasm. It catalyses the reaction tRNA(Cys) + L-cysteine + ATP = L-cysteinyl-tRNA(Cys) + AMP + diphosphate. This Shewanella denitrificans (strain OS217 / ATCC BAA-1090 / DSM 15013) protein is Cysteine--tRNA ligase.